The sequence spans 298 residues: Acetyl-coenzyme A carboxylase carboxyl transferase subunit beta (298 aa).

Residues 25-295 (VWAKCANCGE…SADHREHVVA (271 aa)) form the CoA carboxyltransferase N-terminal domain. Zn(2+) is bound by residues cysteine 29, cysteine 32, cysteine 48, and cysteine 51. The segment at 29-51 (CANCGELTYQKQFNDALKVCPKC) adopts a C4-type zinc-finger fold.

Belongs to the AccD/PCCB family. In terms of assembly, acetyl-CoA carboxylase is a heterohexamer composed of biotin carboxyl carrier protein (AccB), biotin carboxylase (AccC) and two subunits each of ACCase subunit alpha (AccA) and ACCase subunit beta (AccD). The cofactor is Zn(2+).

Its subcellular location is the cytoplasm. The catalysed reaction is N(6)-carboxybiotinyl-L-lysyl-[protein] + acetyl-CoA = N(6)-biotinyl-L-lysyl-[protein] + malonyl-CoA. It functions in the pathway lipid metabolism; malonyl-CoA biosynthesis; malonyl-CoA from acetyl-CoA: step 1/1. Its function is as follows. Component of the acetyl coenzyme A carboxylase (ACC) complex. Biotin carboxylase (BC) catalyzes the carboxylation of biotin on its carrier protein (BCCP) and then the CO(2) group is transferred by the transcarboxylase to acetyl-CoA to form malonyl-CoA. This Herpetosiphon aurantiacus (strain ATCC 23779 / DSM 785 / 114-95) protein is Acetyl-coenzyme A carboxylase carboxyl transferase subunit beta.